Consider the following 207-residue polypeptide: Alpha/beta-tubulin-N-acetyltransferase 9 (207 aa).

The region spanning 35–180 is the N-acetyltransferase domain; that stretch reads EELQRLTASE…QEVTLRLTVS (146 aa).

This sequence belongs to the acetyltransferase family. GNAT subfamily.

It carries out the reaction N-terminal L-methionyl-[tubulin] + acetyl-CoA = N-terminal N(alpha)-acetyl-L-methionyl-[tubulin] + CoA + H(+). Functionally, N-acetyltransferase that mediates the acetylation of the N-terminal residues of alpha- and beta-tubulin. The protein is Alpha/beta-tubulin-N-acetyltransferase 9 (NAT9) of Homo sapiens (Human).